A 104-amino-acid polypeptide reads, in one-letter code: Translation initiation factor 1A (104 aa).

Residues 1–14 show a composition bias toward low complexity; sequence MRGQQAPPQQPTRV. The segment at 1–20 is disordered; it reads MRGQQAPPQQPTRVRTPREN. Positions 12–87 constitute an S1-like domain; the sequence is TRVRTPRENE…EKCDVIWRYT (76 aa).

The protein belongs to the eIF-1A family.

Functionally, seems to be required for maximal rate of protein biosynthesis. Enhances ribosome dissociation into subunits and stabilizes the binding of the initiator Met-tRNA(I) to 40 S ribosomal subunits. This is Translation initiation factor 1A (eIF1A) from Methanococcus maripaludis (strain C6 / ATCC BAA-1332).